The chain runs to 211 residues: Urease accessory protein UreG (211 aa).

GTP is bound at residue 13–20; it reads GPVGSGKT.

This sequence belongs to the SIMIBI class G3E GTPase family. UreG subfamily. Homodimer. UreD, UreF and UreG form a complex that acts as a GTP-hydrolysis-dependent molecular chaperone, activating the urease apoprotein by helping to assemble the nickel containing metallocenter of UreC. The UreE protein probably delivers the nickel.

It is found in the cytoplasm. Facilitates the functional incorporation of the urease nickel metallocenter. This process requires GTP hydrolysis, probably effectuated by UreG. This Alkalilimnicola ehrlichii (strain ATCC BAA-1101 / DSM 17681 / MLHE-1) protein is Urease accessory protein UreG.